The following is a 266-amino-acid chain: Type III pantothenate kinase (266 aa).

An ATP-binding site is contributed by 6-13; sequence DAGNTNIV. Substrate is bound by residues Tyr100 and 107–110; that span reads GADR. Asp109 serves as the catalytic Proton acceptor. Asp129 is a binding site for K(+). Thr132 contacts ATP. A substrate-binding site is contributed by Thr184.

Belongs to the type III pantothenate kinase family. In terms of assembly, homodimer. NH4(+) serves as cofactor. K(+) is required as a cofactor.

It localises to the cytoplasm. The catalysed reaction is (R)-pantothenate + ATP = (R)-4'-phosphopantothenate + ADP + H(+). Its pathway is cofactor biosynthesis; coenzyme A biosynthesis; CoA from (R)-pantothenate: step 1/5. Functionally, catalyzes the phosphorylation of pantothenate (Pan), the first step in CoA biosynthesis. The chain is Type III pantothenate kinase from Clostridium beijerinckii (strain ATCC 51743 / NCIMB 8052) (Clostridium acetobutylicum).